We begin with the raw amino-acid sequence, 152 residues long: Snaclec agkisacutacin subunit A (152 aa).

The N-terminal stretch at 1-23 (MGRFIFVSFGLLVVFLSLSGTAA) is a signal peptide. Residues 24–152 (DCSSGWSSYE…EQQDPFVCEA (129 aa)) enclose the C-type lectin domain. Intrachain disulfides connect cysteine 25/cysteine 36, cysteine 53/cysteine 150, and cysteine 125/cysteine 142. Serine 64, glutamate 66, and glutamate 70 together coordinate Ca(2+). Residue glutamate 151 participates in Ca(2+) binding.

This sequence belongs to the snaclec family. In terms of assembly, heterodimer with subunit B of AaACP or agkisacutacin; disulfide-linked. Expressed by the venom gland.

The protein localises to the secreted. Its function is as follows. Anticoagulant protein which binds to the gamma-carboxyglutamic acid-domain regions of factors IX (F9) and factor X (F10) in the presence of calcium with a 1 to 1 stoichiometry. Also inhibits platelet aggregation by binding to platelet glycoprotein Ibalpha (GP1BA) and functioning as a blocker of von Willebrand factor (VWF). Is devoid of hemorrhagic and lethal activities. Possesses antithrombotic and thrombolytic activities. Also hydrolyzes the Aalpha-chain of fibrinogen (FGA). Does not affect the Bbeta-chain (FGB) and the gamma chain (FGG). The protein is Snaclec agkisacutacin subunit A of Deinagkistrodon acutus (Hundred-pace snake).